Reading from the N-terminus, the 84-residue chain is Keratin-associated protein 19-4 (84 aa).

Belongs to the KRTAP type 19 family. As to quaternary structure, interacts with hair keratins.

Its function is as follows. In the hair cortex, hair keratin intermediate filaments are embedded in an interfilamentous matrix, consisting of hair keratin-associated proteins (KRTAP), which are essential for the formation of a rigid and resistant hair shaft through their extensive disulfide bond cross-linking with abundant cysteine residues of hair keratins. The matrix proteins include the high-sulfur and high-glycine-tyrosine keratins. This Homo sapiens (Human) protein is Keratin-associated protein 19-4 (KRTAP19-4).